A 506-amino-acid polypeptide reads, in one-letter code: Ribose import ATP-binding protein RbsA (506 aa).

2 ABC transporter domains span residues 5–237 (VQLI…VGRP) and 249–492 (PFGA…LAIE). An ATP-binding site is contributed by 37 to 44 (GENGAGKS).

Belongs to the ABC transporter superfamily. Ribose importer (TC 3.A.1.2.1) family. As to quaternary structure, the complex is composed of an ATP-binding protein (RbsA), two transmembrane proteins (RbsC) and a solute-binding protein (RbsB).

The protein resides in the cell inner membrane. It catalyses the reaction D-ribose(out) + ATP + H2O = D-ribose(in) + ADP + phosphate + H(+). Functionally, part of the ABC transporter complex RbsABC involved in ribose import. Responsible for energy coupling to the transport system. The polypeptide is Ribose import ATP-binding protein RbsA (Chelativorans sp. (strain BNC1)).